The primary structure comprises 354 residues: UPF0425 pyridoxal phosphate-dependent protein MMP0002 (354 aa).

N6-(pyridoxal phosphate)lysine is present on lysine 210.

The protein belongs to the UPF0425 family. The cofactor is pyridoxal 5'-phosphate.

The sequence is that of UPF0425 pyridoxal phosphate-dependent protein MMP0002 from Methanococcus maripaludis (strain DSM 14266 / JCM 13030 / NBRC 101832 / S2 / LL).